Here is a 142-residue protein sequence, read N- to C-terminus: Galectin-10 (142 aa).

S2 carries the post-translational modification N-acetylserine. The Galectin domain occupies V6–S138.

In terms of assembly, interacts with CEL. Expressed abundantly in the bone marrow. Expressed exclusively by eosinophils and basophils. Not detected in monocytes and neutrophils. Expressed in CD25-positive regulatory T-cells (Treg) (at protein level). Found in intestinal tissue from patients with Celiac disease, expression is directly related to the histological grade of mucosal damage and to the number of eosinophils found in the duodenal lesion (at protein level). Found in sputum of patients with eosinophilic inflammatory diseases such as asthma (at protein level).

The protein localises to the cytoplasm. Its subcellular location is the cytosol. It localises to the cytoplasmic granule. In terms of biological role, regulates immune responses through the recognition of cell-surface glycans. Essential for the anergy and suppressive function of CD25-positive regulatory T-cells (Treg). In Homo sapiens (Human), this protein is Galectin-10 (CLC).